A 453-amino-acid chain; its full sequence is MNKLSVVILAAGKGTRMYSDLPKVLHKIAGKPMVKHVIDTAKKLSAAQIHLIYGHGADLLKQHLADEPVNWVFQSEQLGTGHAMQQAAPFFQDDENIVMLYGDVPLISKETLECLISQKPENGIALLTVNLDNPTGYGRVIRENGTVTAIVEQKDANPEQLKITEVNTGVMVSDGASFRKWLARLDNNNAQGEYYMTDVIGLANQDGLKVVAVQAKDLMEVEGVNNRLQLANLERHFQRKQVEKLLLAGVTFADPARFDLRGELTHGKDVEIDINVIIEGTVRLGNNVFIGAGCVLKNCTIADNVEIKPYSVIEDAIVGNNAKIGPFSRLRPGAELSENTHVGNFVEIKKAQIGKGSKVNHLSYIGDAEVGHHCNIGAGVITCNYDGANKFKTLIGDNVFVGSDSQLVAPLTIASGATIGAGTTVTKDVQENELVITRVPQRHISNWQRPKRK.

The segment at 1-227 (MNKLSVVILA…LMEVEGVNNR (227 aa)) is pyrophosphorylase. UDP-N-acetyl-alpha-D-glucosamine-binding positions include 9–12 (LAAG), lysine 23, glutamine 74, 79–80 (GT), 101–103 (YGD), glycine 138, glutamate 152, asparagine 167, and asparagine 225. Position 103 (aspartate 103) interacts with Mg(2+). Position 225 (asparagine 225) interacts with Mg(2+). The segment at 228–248 (LQLANLERHFQRKQVEKLLLA) is linker. An N-acetyltransferase region spans residues 249–453 (GVTFADPARF…ISNWQRPKRK (205 aa)). 2 residues coordinate UDP-N-acetyl-alpha-D-glucosamine: arginine 331 and lysine 349. Histidine 361 (proton acceptor) is an active-site residue. The UDP-N-acetyl-alpha-D-glucosamine site is built by tyrosine 364 and asparagine 375. Residues alanine 378, 384–385 (NY), serine 403, alanine 421, and arginine 438 contribute to the acetyl-CoA site.

In the N-terminal section; belongs to the N-acetylglucosamine-1-phosphate uridyltransferase family. This sequence in the C-terminal section; belongs to the transferase hexapeptide repeat family. In terms of assembly, homotrimer. Requires Mg(2+) as cofactor.

It localises to the cytoplasm. It catalyses the reaction alpha-D-glucosamine 1-phosphate + acetyl-CoA = N-acetyl-alpha-D-glucosamine 1-phosphate + CoA + H(+). It carries out the reaction N-acetyl-alpha-D-glucosamine 1-phosphate + UTP + H(+) = UDP-N-acetyl-alpha-D-glucosamine + diphosphate. The protein operates within nucleotide-sugar biosynthesis; UDP-N-acetyl-alpha-D-glucosamine biosynthesis; N-acetyl-alpha-D-glucosamine 1-phosphate from alpha-D-glucosamine 6-phosphate (route II): step 2/2. It functions in the pathway nucleotide-sugar biosynthesis; UDP-N-acetyl-alpha-D-glucosamine biosynthesis; UDP-N-acetyl-alpha-D-glucosamine from N-acetyl-alpha-D-glucosamine 1-phosphate: step 1/1. It participates in bacterial outer membrane biogenesis; LPS lipid A biosynthesis. Functionally, catalyzes the last two sequential reactions in the de novo biosynthetic pathway for UDP-N-acetylglucosamine (UDP-GlcNAc). The C-terminal domain catalyzes the transfer of acetyl group from acetyl coenzyme A to glucosamine-1-phosphate (GlcN-1-P) to produce N-acetylglucosamine-1-phosphate (GlcNAc-1-P), which is converted into UDP-GlcNAc by the transfer of uridine 5-monophosphate (from uridine 5-triphosphate), a reaction catalyzed by the N-terminal domain. The polypeptide is Bifunctional protein GlmU (Histophilus somni (strain 129Pt) (Haemophilus somnus)).